The primary structure comprises 146 residues: Keratin-associated protein 12-2 (146 aa).

23 repeat units span residues 10–14 (CQPAC), 15–19 (CAPSP), 20–24 (CQPAC), 25–29 (CVPSS), 34–38 (CCVPV), 40–44 (CQSSV), 45–49 (CVPVS), 55–59 (CLPVS), 60–64 (CQSSV), 65–69 (CVPMS), 70–74 (FKSAV), 75–79 (CVPVS), 80–84 (CQSSV), 85–89 (CVPVS), 90–94 (CRPIV), 95–99 (CAAPS), 100–104 (CQSSL), 105–109 (CVPVS), 110–114 (CRPVV), 120–124 (CQSSG), 125–129 (CCQPS), 130–134 (CTSVL), and 135–139 (CRPIS). Residues 10-139 (CQPACCAPSP…CTSVLCRPIS (130 aa)) form a 23 X 5 AA approximate repeats region.

It belongs to the KRTAP type 12 family. Interacts with hair keratins. In terms of tissue distribution, restricted to a narrow region of the hair fiber cuticle, lying approximately 20 cell layers above the apex of the dermal papilla of the hair root; not detected in any other tissues.

In terms of biological role, in the hair cortex, hair keratin intermediate filaments are embedded in an interfilamentous matrix, consisting of hair keratin-associated proteins (KRTAP), which are essential for the formation of a rigid and resistant hair shaft through their extensive disulfide bond cross-linking with abundant cysteine residues of hair keratins. The matrix proteins include the high-sulfur and high-glycine-tyrosine keratins. This chain is Keratin-associated protein 12-2 (KRTAP12-2), found in Homo sapiens (Human).